The chain runs to 443 residues: Xaa-Pro dipeptidase (443 aa).

Mn(2+) contacts are provided by Asp248, Asp259, His339, Glu384, and Glu423.

It belongs to the peptidase M24B family. Bacterial-type prolidase subfamily. Mn(2+) serves as cofactor.

It catalyses the reaction Xaa-L-Pro dipeptide + H2O = an L-alpha-amino acid + L-proline. Its function is as follows. Splits dipeptides with a prolyl residue in the C-terminal position. The protein is Xaa-Pro dipeptidase of Colwellia psychrerythraea (strain 34H / ATCC BAA-681) (Vibrio psychroerythus).